Here is a 127-residue protein sequence, read N- to C-terminus: Large ribosomal subunit protein uL22 (127 aa).

The protein belongs to the universal ribosomal protein uL22 family. As to quaternary structure, part of the 50S ribosomal subunit.

This protein binds specifically to 23S rRNA; its binding is stimulated by other ribosomal proteins, e.g. L4, L17, and L20. It is important during the early stages of 50S assembly. It makes multiple contacts with different domains of the 23S rRNA in the assembled 50S subunit and ribosome. In terms of biological role, the globular domain of the protein is located near the polypeptide exit tunnel on the outside of the subunit, while an extended beta-hairpin is found that lines the wall of the exit tunnel in the center of the 70S ribosome. The polypeptide is Large ribosomal subunit protein uL22 (Methylorubrum extorquens (strain CM4 / NCIMB 13688) (Methylobacterium extorquens)).